Here is a 687-residue protein sequence, read N- to C-terminus: Protein-glutamine gamma-glutamyltransferase 2 (687 aa).

Ala2 carries the N-acetylalanine modification. 2 disulfide bridges follow: Cys230-Cys370 and Cys370-Cys371. Active-site residues include Cys277, His335, and Asp358. Asn398, Asp400, Glu437, Glu447, and Glu452 together coordinate Ca(2+). Lys468 carries the N6-acetyllysine modification. 476–483 (RIRVGEGM) is a GTP binding site. Glu539 contacts Ca(2+). 580-583 (RDIY) is a GTP binding site. Gln633 is covalently cross-linked (Isoglutamyl lysine isopeptide (Gln-Lys) (interchain with K-?)).

This sequence belongs to the transglutaminase superfamily. Transglutaminase family. In terms of assembly, monomer. Interacts with phospholipase C; promoting alpha-1 adrenergic receptor signaling. Interacts with PLCD1. It depends on Ca(2+) as a cofactor. In terms of processing, disulfide bond formation inactivates the calcium-dependent acyltransferase activity. Cys-370 can form disulfide bonds with both Cys-230 and Cys-371: formation of a disulfide bond between Cys-230 and Cys-370 facilitates formation of the disulfide between Cys-370 and Cys-371, which promotes inactivation of the acyltransferase activity. May also form interchain disulfids between Cys-230 and Cys-370. Ca(2+) protects against disulfide bond formation and inactivation. Post-translationally, auto-transglutaminated: Forms covalent cross-links mediated by transglutaminase between Gln-633 and the epsilon-amino group of a lysine residue of itself or HMGB1, forming homopolymers and heteropolymers, respectively. S-nitrosylated, leading to inactivation of the acyltransferase activity. Highest levels are detected in the lung. Lower levels are found in the liver, spleen and heart, but not in the brain.

Its subcellular location is the cytoplasm. It localises to the cytosol. The protein resides in the nucleus. The protein localises to the chromosome. It is found in the secreted. Its subcellular location is the extracellular space. It localises to the extracellular matrix. The protein resides in the cell membrane. The protein localises to the mitochondrion. The enzyme catalyses L-glutaminyl-[protein] + L-lysyl-[protein] = [protein]-L-lysyl-N(6)-5-L-glutamyl-[protein] + NH4(+). It catalyses the reaction L-glutaminyl-[protein] + serotonin = 5-serotonyl-L-glutamyl-[protein] + NH4(+). It carries out the reaction L-glutaminyl-[protein] + dopamine = 5-dopaminyl-L-glutamyl-[protein] + NH4(+). The catalysed reaction is L-glutaminyl-[protein] + histamine = 5-histaminyl-L-glutamyl-[protein] + NH4(+). The enzyme catalyses L-glutaminyl-[protein] + (R)-noradrenaline = 5-(R)-noradrenalinyl-L-glutamyl-[protein] + NH4(+). It catalyses the reaction L-glutaminyl-[protein] + H2O = L-glutamyl-[protein] + NH4(+). Its activity is regulated as follows. Acyltransferase activity is regulated by the binding of GTP and Ca(2+): inactivated by GTP, which stabilizes its closed structure, thereby obstructing the accessibility of substrates to the active sites. In contrast, Ca(2+) acts as a cofactor by inducing conformational change to the active open form. In absence of Ca(2+), Mg(2+) may bind Ca(2+)-binding sites, promoting GTP-binding and subsequent inhibition of the acyltransferase activity. Extracellularly reduced and activated by CLIC3. In terms of biological role, calcium-dependent acyltransferase that catalyzes the formation of covalent bonds between peptide-bound glutamine and various primary amines, such as gamma-amino group of peptide-bound lysine, or mono- and polyamines, thereby producing cross-linked or aminated proteins, respectively. Involved in many biological processes, such as bone development, angiogenesis, wound healing, cellular differentiation, chromatin modification and apoptosis. Acts as a protein-glutamine gamma-glutamyltransferase by mediating the cross-linking of proteins, such as ACO2, HSPB6, FN1, HMGB1, RAP1GDS1, SLC25A4/ANT1, SPP1 and WDR54. Under physiological conditions, the protein cross-linking activity is inhibited by GTP; inhibition is relieved by Ca(2+) in response to various stresses. When secreted, catalyzes cross-linking of proteins of the extracellular matrix, such as FN1 and SPP1 resulting in the formation of scaffolds. Plays a key role during apoptosis, both by (1) promoting the cross-linking of cytoskeletal proteins resulting in condensation of the cytoplasm, and by (2) mediating cross-linking proteins of the extracellular matrix, resulting in the irreversible formation of scaffolds that stabilize the integrity of the dying cells before their clearance by phagocytosis, thereby preventing the leakage of harmful intracellular components. In addition to protein cross-linking, can use different monoamine substrates to catalyze a vast array of protein post-translational modifications: mediates aminylation of serotonin, dopamine, noradrenaline or histamine into glutamine residues of target proteins to generate protein serotonylation, dopaminylation, noradrenalinylation or histaminylation, respectively. Mediates protein serotonylation of small GTPases during activation and aggregation of platelets, leading to constitutive activation of these GTPases. Plays a key role in chromatin organization by mediating serotonylation and dopaminylation of histone H3. Catalyzes serotonylation of 'Gln-5' of histone H3 (H3Q5ser) during serotonergic neuron differentiation, thereby facilitating transcription. Acts as a mediator of neurotransmission-independent role of nuclear dopamine in ventral tegmental area (VTA) neurons: catalyzes dopaminylation of 'Gln-5' of histone H3 (H3Q5dop), thereby regulating relapse-related transcriptional plasticity in the reward system. Regulates vein remodeling by mediating serotonylation and subsequent inactivation of ATP2A2/SERCA2. Also acts as a protein deamidase by mediating the side chain deamidation of specific glutamine residues of proteins to glutamate. Catalyzes specific deamidation of protein gliadin, a component of wheat gluten in the diet. May also act as an isopeptidase cleaving the previously formed cross-links. Also able to participate in signaling pathways independently of its acyltransferase activity: acts as a signal transducer in alpha-1 adrenergic receptor-mediated stimulation of phospholipase C-delta (PLCD) activity and is required for coupling alpha-1 adrenergic agonists to the stimulation of phosphoinositide lipid metabolism. The sequence is that of Protein-glutamine gamma-glutamyltransferase 2 from Bos taurus (Bovine).